The following is a 708-amino-acid chain: Ion-translocating oxidoreductase complex subunit C (708 aa).

4Fe-4S ferredoxin-type domains follow at residues 369–397 and 407–436; these read GEPQ…QQLY and KATT…VQYF. Cys377, Cys380, Cys383, Cys387, Cys416, Cys419, Cys422, and Cys426 together coordinate [4Fe-4S] cluster. The segment at 599-686 is disordered; the sequence is KARKLEQQQS…EEQVDPRKAA (88 aa).

This sequence belongs to the 4Fe4S bacterial-type ferredoxin family. RnfC subfamily. As to quaternary structure, the complex is composed of six subunits: RsxA, RsxB, RsxC, RsxD, RsxE and RsxG. [4Fe-4S] cluster serves as cofactor.

The protein resides in the cell inner membrane. Its function is as follows. Part of a membrane-bound complex that couples electron transfer with translocation of ions across the membrane. Required to maintain the reduced state of SoxR. The polypeptide is Ion-translocating oxidoreductase complex subunit C (Escherichia coli (strain 55989 / EAEC)).